A 1553-amino-acid chain; its full sequence is ABC-type transporter cctS (1553 aa).

Helical transmembrane passes span 27 to 47 (LIPL…YFHA), 90 to 110 (LEVA…IFSG), 114 to 134 (DLTS…ILFV), and 151 to 171 (SVLY…AILG). The N-linked (GlcNAc...) asparagine glycan is linked to Asn176. 5 consecutive transmembrane segments (helical) span residues 177–197 (FTIA…FHWT), 286–306 (LLWQ…PPVL), 324–344 (TAWL…VAGC), 413–433 (GYLY…TYLL), and 438–458 (GISG…NILI). Positions 293-582 (ATLNSFAVFV…IADAITFLLR (290 aa)) constitute an ABC transmembrane type-1 1 domain. An N-linked (GlcNAc...) asparagine glycan is attached at Asn524. The next 2 helical transmembrane spans lie at 527–547 (TFFS…TVVW) and 550–570 (SMGT…RIPF). N-linked (GlcNAc...) asparagine glycosylation occurs at Asn617. The 240-residue stretch at 635 to 874 (NKRSDIQLTE…GRIDADIMQN (240 aa)) folds into the ABC transporter 1 domain. 670–677 (GPSGSGKS) is a binding site for ATP. N-linked (GlcNAc...) asparagine glycosylation is present at Asn725. The helical transmembrane segment at 948–970 (WYWVLVLFMFGIQQFISLATNIW) threads the bilayer. In terms of domain architecture, ABC transmembrane type-1 2 spans 951-1255 (VLVLFMFGIQ…FVQLYAIVQQ (305 aa)). Residue Asn992 is glycosylated (N-linked (GlcNAc...) asparagine). The helical transmembrane segment at 1017-1037 (IYVAICLAYAFFTFARDLIVF) threads the bilayer. Asn1085 carries N-linked (GlcNAc...) asparagine glycosylation. The next 4 helical transmembrane spans lie at 1086 to 1108 (ISTF…VFIS), 1113 to 1135 (AFLI…FING), 1204 to 1224 (FLGS…LESV), and 1229 to 1249 (AALV…FVQL). Residues 1294 to 1533 (VRFDAYTTRY…DDDGIFRRLC (240 aa)) enclose the ABC transporter 2 domain. 1328–1335 (GRTGAGKS) contributes to the ATP binding site.

Belongs to the ABC transporter superfamily.

It localises to the membrane. Its pathway is mycotoxin biosynthesis. Its function is as follows. ABC-type transporter; part of the gene cluster that mediates the biosynthesis of the mycotoxin cyclochlorotine, a hepatotoxic and carcinogenic cyclic chlorinated pentapeptide. CctS is essential for the biosynthesis of cyclochlorotine, maybe as a chloride channel that supplies chloride for chlorination by cctP2. This Talaromyces islandicus (Penicillium islandicum) protein is ABC-type transporter cctS.